The chain runs to 144 residues: Mediator of RNA polymerase II transcription subunit 21 (144 aa).

Belongs to the Mediator complex subunit 21 family. As to quaternary structure, interacts with PPARG. Component of the Mediator complex, which is composed of MED1, MED4, MED6, MED7, MED8, MED9, MED10, MED11, MED12, MED13, MED13L, MED14, MED15, MED16, MED17, MED18, MED19, MED20, MED21, MED22, MED23, MED24, MED25, MED26, MED27, MED29, MED30, MED31, CCNC, CDK8 and CDC2L6/CDK11. The MED12, MED13, CCNC and CDK8 subunits form a distinct module termed the CDK8 module. Mediator containing the CDK8 module is less active than Mediator lacking this module in supporting transcriptional activation. Individual preparations of the Mediator complex lacking one or more distinct subunits have been variously termed ARC, CRSP, DRIP, PC2, SMCC and TRAP. Interacts with THRA in a ligand-dependent fashion.

It localises to the nucleus. Functionally, component of the Mediator complex, a coactivator involved in the regulated transcription of nearly all RNA polymerase II-dependent genes. Mediator functions as a bridge to convey information from gene-specific regulatory proteins to the basal RNA polymerase II transcription machinery. Mediator is recruited to promoters by direct interactions with regulatory proteins and serves as a scaffold for the assembly of a functional preinitiation complex with RNA polymerase II and the general transcription factors. The sequence is that of Mediator of RNA polymerase II transcription subunit 21 (MED21) from Homo sapiens (Human).